A 396-amino-acid chain; its full sequence is MSKVIFHVDVNSAFLSWTAVEKLKNGEDIDIRKVPSVIGGDEKSRHGVVLAKSTPAKKYGIVTGESLYHARKKCPNILVFPPRFDTYRKASESMMNLLKRFTPHIEKYSIDECFMDVTNDLRGMESVEFASIIKERIKNELGFTVNVGISTNRLLAKMASELNKPDKINTLYKHEIKDKMWPLPVGELFMVGKSMKRKLNELHIKTIGELAKYDVNILKAKFKSHGNMVWEYANGIDNSDISRYRDEIKCISNETTLSMDLTDTEKIHKILVTLCENLGQRLRDANKYCTSISVNIRTSDFRNYSHQKKLKNAVSSTRDIILYADKIFNEMWGREPIRLLGVQLSGLCSGSSVQISMFDEKTDTRNEILDKTLDSIRKKYGDNVIMRSVLLEKEEK.

A UmuC domain is found at 5–192 (IFHVDVNSAF…LPVGELFMVG (188 aa)). D9 and D111 together coordinate Mg(2+). The active site involves E112.

It belongs to the DNA polymerase type-Y family. In terms of assembly, monomer. Mg(2+) is required as a cofactor.

It is found in the cytoplasm. The catalysed reaction is DNA(n) + a 2'-deoxyribonucleoside 5'-triphosphate = DNA(n+1) + diphosphate. Its function is as follows. Poorly processive, error-prone DNA polymerase involved in untargeted mutagenesis. Copies undamaged DNA at stalled replication forks, which arise in vivo from mismatched or misaligned primer ends. These misaligned primers can be extended by PolIV. Exhibits no 3'-5' exonuclease (proofreading) activity. May be involved in translesional synthesis, in conjunction with the beta clamp from PolIII. The protein is DNA polymerase IV of Clostridium acetobutylicum (strain ATCC 824 / DSM 792 / JCM 1419 / IAM 19013 / LMG 5710 / NBRC 13948 / NRRL B-527 / VKM B-1787 / 2291 / W).